The sequence spans 423 residues: MDKIIIEGGQTRLEGEVVIEGAKNAVLPLLAASILPSKGKTILRNVPILSDVFTMNNVVRGLDIRVDFNEAANEITVDASGHILDEAPYEYVSQMRASIVVLGPILARNGHAKVSMPGGCTIGSRPINLHLKGLEAMGATITQKGGDITAQADRLQGAMIYMDFPSVGATQNLMMAATLADGVTTIENAAREPEIVDLAQFLNKMGARIRGAGTETLTITGVTSLHGVEHDVVQDRIEAGTFMVAAAMTSGNVLIRDAVWEHNRPLISKLMEMGVSVTEEEYGIRVQANTPKLKPVTVKTLPHPGFPTDMQAQFTALMAVVNGESTMVETVFENRFQHLEEMRRMGLQSEILRETAMIHGGRQLQGAPVMSTDLRASAALILTGIVAQGVTIVNNLVHLDRGYYQFHEKLAKLGATISRSSEV.

23–24 (KN) contacts phosphoenolpyruvate. Residue arginine 96 coordinates UDP-N-acetyl-alpha-D-glucosamine. The active-site Proton donor is cysteine 120. Cysteine 120 carries the post-translational modification 2-(S-cysteinyl)pyruvic acid O-phosphothioketal. UDP-N-acetyl-alpha-D-glucosamine is bound by residues aspartate 309 and valine 331.

Belongs to the EPSP synthase family. MurA subfamily.

Its subcellular location is the cytoplasm. It carries out the reaction phosphoenolpyruvate + UDP-N-acetyl-alpha-D-glucosamine = UDP-N-acetyl-3-O-(1-carboxyvinyl)-alpha-D-glucosamine + phosphate. It participates in cell wall biogenesis; peptidoglycan biosynthesis. Cell wall formation. Adds enolpyruvyl to UDP-N-acetylglucosamine. The protein is UDP-N-acetylglucosamine 1-carboxyvinyltransferase 1 of Streptococcus pyogenes serotype M3 (strain ATCC BAA-595 / MGAS315).